A 747-amino-acid chain; its full sequence is MLWIQPACLLSLIFSAHIAAVSIKHLLNGSDHDTDVGEQKDIFEINLAAGLNLFQGDILLPRTRNAMRDPSSRWKLPIPYILADNLELNAKGAILHAFEMFRLKSCVDFKPYEGESSYIIFQKLSGCWSMIGDQQVGQNISIGEGCDFKATIEHEILHALGFFHEQSRTDRDDYVNIWWDQIITDYEHNFNTYDDNTITDLNTPYDYESLMHYGPFSFNKNESIPTITTKIPEFNTIIGQLPDFSAIDLIRLNRMYNCTATHTLLDHCDFEKTNVCGMIQGTRDDADWAHGDSSQPEQVDHTLVGQCKGAGYFMFFNTSLGARGEAALLESRILYPKRKQQCLQFFYKMTGSPADRFEVWVRRDDNAGKVRQLAKIQTFQGDSDHNWKIAHVTLNEEKKFRYVFLGTKGDPGNSSGGIYLDDITLTETPCPAGVWTIRNISQILENTVKGDKLVSPRFYNSEGYGVGVTLYPNGRITSNSGFLGLTFHLYSGDNDAILEWPVENRQAIMTILDQEADTRNRMSLTLMFTTSKNQTSSAINGSVIWDRPSKVGVYDKDCDCFRSLDWGWGQAISHQLLKRRNFLKGDSLIIFVDFKDLTHLNRTEVPASARSTMPRGLLLQGQESPALGESSRKAMLEESLPSSLGQRHPSRQKRSVENTGPMEDHNWPQYFRDPCDPNPCQNEGTCVNVKGMASCRCVSGHAFFYAGERCQAMHVHGSLLGLLIGCIAGLIFLTFVTFSTTNGKLRQ.

A signal peptide spans 1 to 20 (MLWIQPACLLSLIFSAHIAA). The propeptide occupies 21–64 (VSIKHLLNGSDHDTDVGEQKDIFEINLAAGLNLFQGDILLPRTR). N-linked (GlcNAc...) asparagine glycans are attached at residues Asn28 and Asn139. Residues 65 to 259 (NAMRDPSSRW…IRLNRMYNCT (195 aa)) form the Peptidase M12A domain. At 65-713 (NAMRDPSSRW…FYAGERCQAM (649 aa)) the chain is on the extracellular side. Intrachain disulfides connect Cys106–Cys258, Cys127–Cys146, and Cys268–Cys430. Residue His154 coordinates Zn(2+). The active site involves Glu155. Positions 158 and 164 each coordinate Zn(2+). N-linked (GlcNAc...) asparagine glycans are attached at residues Asn221, Asn257, Asn317, Asn413, Asn439, Asn533, and Asn540. In terms of domain architecture, MAM spans 263 to 432 (TLLDHCDFEK…ITLTETPCPA (170 aa)). Positions 433-594 (GVWTIRNISQ…GDSLIIFVDF (162 aa)) constitute an MATH domain. Residues 638 to 663 (ESLPSSLGQRHPSRQKRSVENTGPME) form a disordered region. The 41-residue stretch at 671-711 (FRDPCDPNPCQNEGTCVNVKGMASCRCVSGHAFFYAGERCQ) folds into the EGF-like domain. Cystine bridges form between Cys675-Cys686, Cys680-Cys695, and Cys697-Cys710. Residues 714–741 (HVHGSLLGLLIGCIAGLIFLTFVTFSTT) form a helical membrane-spanning segment. The Cytoplasmic portion of the chain corresponds to 742–747 (NGKLRQ).

As to quaternary structure, homotetramer consisting of disulfide-linked alpha subunits, homooligomer consisting of disulfide-linked alpha subunit homodimers, or heterotetramer of two alpha and two beta subunits formed by non-covalent association of two disulfide-linked heterodimers. Genetic factors determine which oligomer(s) will be formed (strain-specific). Interacts with MBL2 through its carbohydrate moiety. This interaction may inhibit its catalytic activity. Requires Zn(2+) as cofactor. Post-translationally, N-glycosylated; contains GlcNAc, galactose, mannose and a small amount of fucose. Kidney, intestinal brush borders and salivary ducts.

Its subcellular location is the membrane. It carries out the reaction Hydrolysis of protein and peptide substrates preferentially on carboxyl side of hydrophobic residues.. With respect to regulation, inhibited by metal ion chelators EDTA and 1,10-phenanthroline, bradykinin analogs, cysteine, CONA65, and several hydroxamate compounds, particularly tyrosine hydroxamate. Not inhibited by 3,4-dichloroisocourmarin, soybean trypsin inhibitor, or the cysteine proteinase inhibitors iodoacetic acid and E-64. The protein is Meprin A subunit alpha (Mep1a) of Mus musculus (Mouse).